The chain runs to 473 residues: Siroheme synthase (473 aa).

Residues 1 to 203 (MNYLPIFIDL…GNKEQAINVL (203 aa)) form a precorrin-2 dehydrogenase /sirohydrochlorin ferrochelatase region. NAD(+) contacts are provided by residues 22–23 (EV) and 43–44 (KE). Residue serine 128 is modified to Phosphoserine. The segment at 215–473 (GEIILVGAGP…KNKFSTLTFI (259 aa)) is uroporphyrinogen-III C-methyltransferase. Proline 224 contributes to the S-adenosyl-L-methionine binding site. Aspartate 247 functions as the Proton acceptor in the catalytic mechanism. Lysine 269 (proton donor) is an active-site residue. S-adenosyl-L-methionine-binding positions include 300 to 302 (GGD), isoleucine 305, methionine 382, and glycine 411.

This sequence in the N-terminal section; belongs to the precorrin-2 dehydrogenase / sirohydrochlorin ferrochelatase family. The protein in the C-terminal section; belongs to the precorrin methyltransferase family.

It carries out the reaction uroporphyrinogen III + 2 S-adenosyl-L-methionine = precorrin-2 + 2 S-adenosyl-L-homocysteine + H(+). The enzyme catalyses precorrin-2 + NAD(+) = sirohydrochlorin + NADH + 2 H(+). The catalysed reaction is siroheme + 2 H(+) = sirohydrochlorin + Fe(2+). It functions in the pathway cofactor biosynthesis; adenosylcobalamin biosynthesis; precorrin-2 from uroporphyrinogen III: step 1/1. The protein operates within cofactor biosynthesis; adenosylcobalamin biosynthesis; sirohydrochlorin from precorrin-2: step 1/1. Its pathway is porphyrin-containing compound metabolism; siroheme biosynthesis; precorrin-2 from uroporphyrinogen III: step 1/1. It participates in porphyrin-containing compound metabolism; siroheme biosynthesis; siroheme from sirohydrochlorin: step 1/1. It functions in the pathway porphyrin-containing compound metabolism; siroheme biosynthesis; sirohydrochlorin from precorrin-2: step 1/1. Its function is as follows. Multifunctional enzyme that catalyzes the SAM-dependent methylations of uroporphyrinogen III at position C-2 and C-7 to form precorrin-2 via precorrin-1. Then it catalyzes the NAD-dependent ring dehydrogenation of precorrin-2 to yield sirohydrochlorin. Finally, it catalyzes the ferrochelation of sirohydrochlorin to yield siroheme. The polypeptide is Siroheme synthase (Buchnera aphidicola subsp. Acyrthosiphon pisum (strain APS) (Acyrthosiphon pisum symbiotic bacterium)).